A 546-amino-acid chain; its full sequence is CTP synthase (546 aa).

Residues 1–269 (MNPNTKIIFV…DAKLVELLNL (269 aa)) form an amidoligase domain region. Ser16 provides a ligand contact to CTP. Ser16 is a UTP binding site. ATP is bound by residues 17 to 22 (SLGKGV) and Asp74. Mg(2+) contacts are provided by Asp74 and Glu143. CTP contacts are provided by residues 150-152 (DIE), 190-195 (KTKPTQ), and Lys226. UTP-binding positions include 190–195 (KTKPTQ) and Lys226. The 253-residue stretch at 294–546 (TIAMVGKYVS…IHAAVEKSNK (253 aa)) folds into the Glutamine amidotransferase type-1 domain. Gly356 lines the L-glutamine pocket. Cys383 acts as the Nucleophile; for glutamine hydrolysis in catalysis. Residues 384–387 (LGMQ), Glu407, and Arg474 contribute to the L-glutamine site. Active-site residues include His519 and Glu521.

It belongs to the CTP synthase family. In terms of assembly, homotetramer.

It catalyses the reaction UTP + L-glutamine + ATP + H2O = CTP + L-glutamate + ADP + phosphate + 2 H(+). It carries out the reaction L-glutamine + H2O = L-glutamate + NH4(+). The catalysed reaction is UTP + NH4(+) + ATP = CTP + ADP + phosphate + 2 H(+). Its pathway is pyrimidine metabolism; CTP biosynthesis via de novo pathway; CTP from UDP: step 2/2. Allosterically activated by GTP, when glutamine is the substrate; GTP has no effect on the reaction when ammonia is the substrate. The allosteric effector GTP functions by stabilizing the protein conformation that binds the tetrahedral intermediate(s) formed during glutamine hydrolysis. Inhibited by the product CTP, via allosteric rather than competitive inhibition. Catalyzes the ATP-dependent amination of UTP to CTP with either L-glutamine or ammonia as the source of nitrogen. Regulates intracellular CTP levels through interactions with the four ribonucleotide triphosphates. This Francisella philomiragia subsp. philomiragia (strain ATCC 25017 / CCUG 19701 / FSC 153 / O#319-036) protein is CTP synthase.